Here is a 387-residue protein sequence, read N- to C-terminus: MANEYLFTSESVSEGHPDKVADQISDAILDAIFQQDPKARVAAETLCNTGLVVLAGEITTFANVDYIEVARQTIKRIGYDNADYGIDYKSCAVLVAYDKQSPDIAQGVDEGAGIDLDQGAGDQGLMFGYACDETPELMPAAIHYAHRIVERQSELRKDGRLPWLRPDAKSQVTLRYVDGRPVSIDTIVLSTQHAPEMQHKDIEEAVIESIIKPVVPAEWLKDTRFLVNPTGRFVIGGPQGDCGLTGRKIIVDTYGGAAPHGGGAFSGKDPSKVDRSAAYAGRYVAKNIVAAGLAERAQIQISYAIGVAKPTSVMVTTFGTGKISDEKIAQLVLEHFDLRPKGIVQMLDLLRPIYQKTAAYGHFGREEPEFSWERTDKAQALRAAAGL.

ATP is bound at residue H16. A Mg(2+)-binding site is contributed by D18. E44 is a binding site for K(+). The L-methionine site is built by E57 and Q100. A flexible loop region spans residues 100 to 110; sequence QSPDIAQGVDE. ATP-binding positions include 167–169, 232–233, D241, 247–248, A264, and K268; these read DAK, RF, and RK. An L-methionine-binding site is contributed by D241. K272 is a binding site for L-methionine.

This sequence belongs to the AdoMet synthase family. As to quaternary structure, homotetramer; dimer of dimers. Requires Mg(2+) as cofactor. It depends on K(+) as a cofactor.

It is found in the cytoplasm. It carries out the reaction L-methionine + ATP + H2O = S-adenosyl-L-methionine + phosphate + diphosphate. It functions in the pathway amino-acid biosynthesis; S-adenosyl-L-methionine biosynthesis; S-adenosyl-L-methionine from L-methionine: step 1/1. In terms of biological role, catalyzes the formation of S-adenosylmethionine (AdoMet) from methionine and ATP. The overall synthetic reaction is composed of two sequential steps, AdoMet formation and the subsequent tripolyphosphate hydrolysis which occurs prior to release of AdoMet from the enzyme. This Janthinobacterium sp. (strain Marseille) (Minibacterium massiliensis) protein is S-adenosylmethionine synthase.